Reading from the N-terminus, the 317-residue chain is Acetyl-coenzyme A carboxylase carboxyl transferase subunit alpha (317 aa).

The CoA carboxyltransferase C-terminal domain maps to 40–293 (LEGRVRDAMV…EAVIGDALKE (254 aa)).

Belongs to the AccA family. As to quaternary structure, acetyl-CoA carboxylase is a heterohexamer composed of biotin carboxyl carrier protein (AccB), biotin carboxylase (AccC) and two subunits each of ACCase subunit alpha (AccA) and ACCase subunit beta (AccD).

It is found in the cytoplasm. It carries out the reaction N(6)-carboxybiotinyl-L-lysyl-[protein] + acetyl-CoA = N(6)-biotinyl-L-lysyl-[protein] + malonyl-CoA. Its pathway is lipid metabolism; malonyl-CoA biosynthesis; malonyl-CoA from acetyl-CoA: step 1/1. Component of the acetyl coenzyme A carboxylase (ACC) complex. First, biotin carboxylase catalyzes the carboxylation of biotin on its carrier protein (BCCP) and then the CO(2) group is transferred by the carboxyltransferase to acetyl-CoA to form malonyl-CoA. This chain is Acetyl-coenzyme A carboxylase carboxyl transferase subunit alpha, found in Sinorhizobium medicae (strain WSM419) (Ensifer medicae).